The primary structure comprises 180 residues: Large ribosomal subunit protein uL5 (180 aa).

It belongs to the universal ribosomal protein uL5 family. As to quaternary structure, part of the 50S ribosomal subunit; part of the 5S rRNA/L5/L18/L25 subcomplex. Contacts the 5S rRNA and the P site tRNA. Forms a bridge to the 30S subunit in the 70S ribosome.

Functionally, this is one of the proteins that bind and probably mediate the attachment of the 5S RNA into the large ribosomal subunit, where it forms part of the central protuberance. In the 70S ribosome it contacts protein S13 of the 30S subunit (bridge B1b), connecting the 2 subunits; this bridge is implicated in subunit movement. Contacts the P site tRNA; the 5S rRNA and some of its associated proteins might help stabilize positioning of ribosome-bound tRNAs. This chain is Large ribosomal subunit protein uL5, found in Limosilactobacillus reuteri (strain DSM 20016) (Lactobacillus reuteri).